A 1486-amino-acid polypeptide reads, in one-letter code: Chromosome partition protein MukB (1486 aa).

ATP is bound at residue 34–41; sequence GGNGAGKS. 3 coiled-coil regions span residues 326–418, 444–480, and 509–603; these read LEAD…QYNQ, LETFQAKELEATEKMLSLEQKMSMAQTAHSQFEQAYQ, and RHLA…RAPV. A flexible hinge region spans residues 666–783; that stretch reads PGGSEDQRLN…EVPLFGRAAR (118 aa). Coiled coils occupy residues 835-923, 977-1115, and 1209-1266; these read EAEI…AKLE, EMLS…TAKA, and VEAI…QNVS.

This sequence belongs to the SMC family. MukB subfamily. As to quaternary structure, homodimerization via its hinge domain. Binds to DNA via its C-terminal region. Interacts, and probably forms a ternary complex, with MukE and MukF via its C-terminal region. The complex formation is stimulated by calcium or magnesium. Interacts with tubulin-related protein FtsZ.

It is found in the cytoplasm. Its subcellular location is the nucleoid. Its function is as follows. Plays a central role in chromosome condensation, segregation and cell cycle progression. Functions as a homodimer, which is essential for chromosome partition. Involved in negative DNA supercoiling in vivo, and by this means organize and compact chromosomes. May achieve or facilitate chromosome segregation by condensation DNA from both sides of a centrally located replisome during cell division. This is Chromosome partition protein MukB from Escherichia coli O157:H7.